The following is a 23-amino-acid chain: Endochitinase B (23 aa).

The protein belongs to the glycosyl hydrolase 19 family. Chitinase class I subfamily.

It carries out the reaction Random endo-hydrolysis of N-acetyl-beta-D-glucosaminide (1-&gt;4)-beta-linkages in chitin and chitodextrins.. Defense against chitin-containing fungal pathogens. This chain is Endochitinase B, found in Pisum sativum (Garden pea).